A 465-amino-acid polypeptide reads, in one-letter code: Probable glucan endo-1,3-beta-glucosidase eglC (465 aa).

The signal sequence occupies residues 1–19 (MFTKTQILALALSIASAEA). The active-site Proton donor is E128. An N-linked (GlcNAc...) asparagine glycan is attached at N183. E239 (nucleophile) is an active-site residue. N-linked (GlcNAc...) asparagine glycosylation occurs at N318. Composition is skewed to low complexity over residues 320 to 333 (SSAS…SAQS) and 380 to 438 (SPSA…ATPA). Disordered regions lie at residues 320–356 (SSAS…GHGG) and 380–440 (SPSA…PADF). Residue G442 is the site of GPI-anchor amidated glycine attachment. The propeptide at 443–465 (AGSRLSGSIFGAAMLVAALAVAL) is removed in mature form.

This sequence belongs to the glycosyl hydrolase 17 family. In terms of processing, the GPI-anchor is attached to the protein in the endoplasmic reticulum and serves to target the protein to the cell surface. There, the glucosamine-inositol phospholipid moiety is cleaved off and the GPI-modified mannoprotein is covalently attached via its lipidless GPI glycan remnant to the 1,6-beta-glucan of the outer cell wall layer.

Its subcellular location is the cell membrane. The protein localises to the secreted. The protein resides in the cell wall. The enzyme catalyses Hydrolysis of (1-&gt;3)-beta-D-glucosidic linkages in (1-&gt;3)-beta-D-glucans.. Its function is as follows. Glucanases play a role in cell expansion during growth, in cell-cell fusion during mating, and in spore release during sporulation. This enzyme may be involved in beta-glucan degradation and also function biosynthetically as a transglycosylase. This Emericella nidulans (strain FGSC A4 / ATCC 38163 / CBS 112.46 / NRRL 194 / M139) (Aspergillus nidulans) protein is Probable glucan endo-1,3-beta-glucosidase eglC (eglC).